We begin with the raw amino-acid sequence, 319 residues long: NAP1-binding protein (319 aa).

Basic residues predominate over residues 34-43 (SALRSRRKQM). A disordered region spans residues 34 to 74 (SALRSRRKQMRPTGKSVLKRPRKVTDRKTEEKIRTNRRKTP). Residues 56–67 (KVTDRKTEEKIR) show a composition bias toward basic and acidic residues. Phosphoserine occurs at positions 251 and 260. The disordered stretch occupies residues 278-319 (EMQPLQENISPACPTPPYRSRETEKEDETLSPISVDFSSYLS).

Interacts with NDC1 and MPS2.

The sequence is that of NAP1-binding protein (NBP1) from Saccharomyces cerevisiae (strain ATCC 204508 / S288c) (Baker's yeast).